The sequence spans 95 residues: Protein E7 (95 aa).

Positions 1–40 (MIGKEATIPDIVLELQQLVQPTDLHCYEELSEEETETEEE) are E7 terminal domain. Positions 24–28 (LHCYE) match the LXCXE motif; interaction with host RB1 and TMEM173/STING motif. Residues 52–88 (CCFCGSKLRLIVLATHAGIRSQEELLLGEVQLVCPNC) fold into a zinc finger. The short motif at 70–78 (IRSQEELLL) is the Nuclear export signal element.

The protein belongs to the papillomaviridae E7 protein family. As to quaternary structure, homodimer. Homooligomer. Interacts with host RB1; this interaction induces dissociation of RB1-E2F1 complex thereby disrupting RB1 activity. Interacts with host EP300; this interaction represses EP300 transcriptional activity. Interacts with protein E2; this interaction inhibits E7 oncogenic activity. Interacts with host TMEM173/STING; this interaction impairs the ability of TMEM173/STING to sense cytosolic DNA and promote the production of type I interferon (IFN-alpha and IFN-beta). Highly phosphorylated.

It localises to the host cytoplasm. The protein localises to the host nucleus. Functionally, plays a role in viral genome replication by driving entry of quiescent cells into the cell cycle. Stimulation of progression from G1 to S phase allows the virus to efficiently use the cellular DNA replicating machinery to achieve viral genome replication. E7 protein has both transforming and trans-activating activities. Induces the disassembly of the E2F1 transcription factor from RB1, with subsequent transcriptional activation of E2F1-regulated S-phase genes. Interferes with host histone deacetylation mediated by HDAC1 and HDAC2, leading to transcription activation. Also plays a role in the inhibition of both antiviral and antiproliferative functions of host interferon alpha. Interaction with host TMEM173/STING impairs the ability of TMEM173/STING to sense cytosolic DNA and promote the production of type I interferon (IFN-alpha and IFN-beta). The sequence is that of Protein E7 from Human papillomavirus 17.